Reading from the N-terminus, the 1342-residue chain is MVYSYTEKKRIRKDFGKRPQVLDVPYLLSIQLDSFQKFIEQDPEGQYGLEAAFRSVFPIQSYSGNSELQYVSYRLGEPVFDVQECQIRGVTYSAPLRVKLRLVIYEREAPEGTVKDIKEQEVYMGEIPLMTDNGTFVINGTERVIVSQLHRSPGVFFDSDKGKTHSSGKVLYNARIIPYRGSWLDFEFDPKDNLFVRIDRRRKLPATIILRALNYTTEQILDLFFEKVIFEIRDNKLQMELVPERLRGETASFDIEANGKVYVEKGRRITARHIRQLEKDDVKLIEVPVEYIAGKVVAKDYIDESTGELICAANMELSLDLLAKLSQSGHKRIETLFTNDLDHGPYISETLRVDPTNDRLSALVEIYRMMRPGEPPTREAAESLFENLFFSEDRYDLSAVGRMKFNRSLLREEIEGSGILSKDDIIDVMKKLIDIRNGKGEVDDIDHLGNRRIRSVGEMAENQFRVGLVRVERAVKERLSLGDLDTLMPQDMINAKPISAAVKEFFGSSQLSQFMDQNNPLSEITHKRRISALGPGGLTRERAGFEVRDVHPTHYGRVCPIETPEGPNIGLINSLSVYAQTNEYGFLETPYRKVTDGVVTDEIHYLSAIEEGNYVIAQANSNLDEEGHFVEDLVTCRSKGESSLFSRDQVDYMDVSTQQVVSVGASLIPFLEHDDANRALMGANMQRQAVPTLRADKPLVGTGMERAVAVDSGVTAVAKRGGVVQYVDASRIVIKVNEDEMYPGEAGIDIYNLTKYTRSNQNTCINQMPCVSLGEPVERGDVLADGPSTDLGELALGQNMRVAFMPWNGYNFEDSILVSERVVQEDRFTTIHIQELACVSRDTKLGPEEITADIPNVGEAALSKLDESGIVYIGAEVTGGDILVGKVTPKGETQLTPEEKLLRAIFGEKASDVKDSSLRVPNGVSGTVIDVQVFTRDGVEKDKRALEIEEMQLKQAKKDLSEELQILEAGLFSRIRAVLVAGGVEAEKLDKLPRDRWLELGLTDEEKQNQLEQLAEQYDELKHEFEKKLEAKRRKITQGDDLSPGVLKIVKVYLAVKRRIQPGDKMAGRHGNKGVISKINPIEDMPYDENGTPVDIVLNPLGVPSRMNIGQILETHLGMAAKGIGDKINAMLKQQQEVAKLREFIQRAYDLGADVRQKVDLSTFSDEEVMRLAENLRKGMPIATPVFDGAKEAEIKELLKLGDLPTSGQIRLYDGRTGEQFERPVTVGYMYMLKLNHLVDDKMHARSTGSYSLVTQQPLGGKAQFGGQRFGEMEVWALEAYGAAYTLQEMLTVKSDDVNGRTKMYKNIVDGNHQMEPGMPESFNVLLKEIRSLGINIELEDE.

2 positions are modified to N6-acetyllysine: Lys-1022 and Lys-1200.

This sequence belongs to the RNA polymerase beta chain family. As to quaternary structure, the RNAP catalytic core consists of 2 alpha, 1 beta, 1 beta' and 1 omega subunit. When a sigma factor is associated with the core the holoenzyme is formed, which can initiate transcription.

The enzyme catalyses RNA(n) + a ribonucleoside 5'-triphosphate = RNA(n+1) + diphosphate. Functionally, DNA-dependent RNA polymerase catalyzes the transcription of DNA into RNA using the four ribonucleoside triphosphates as substrates. The protein is DNA-directed RNA polymerase subunit beta of Escherichia coli O6:K15:H31 (strain 536 / UPEC).